Here is a 154-residue protein sequence, read N- to C-terminus: 6,7-dimethyl-8-ribityllumazine synthase (154 aa).

Residues phenylalanine 15, 47–49 (TFD), and 71–73 (AVI) contribute to the 5-amino-6-(D-ribitylamino)uracil site. 76 to 77 (ET) contacts (2S)-2-hydroxy-3-oxobutyl phosphate. The Proton donor role is filled by histidine 79. Leucine 104 is a 5-amino-6-(D-ribitylamino)uracil binding site. A (2S)-2-hydroxy-3-oxobutyl phosphate-binding site is contributed by arginine 119.

It belongs to the DMRL synthase family.

The enzyme catalyses (2S)-2-hydroxy-3-oxobutyl phosphate + 5-amino-6-(D-ribitylamino)uracil = 6,7-dimethyl-8-(1-D-ribityl)lumazine + phosphate + 2 H2O + H(+). It participates in cofactor biosynthesis; riboflavin biosynthesis; riboflavin from 2-hydroxy-3-oxobutyl phosphate and 5-amino-6-(D-ribitylamino)uracil: step 1/2. Its function is as follows. Catalyzes the formation of 6,7-dimethyl-8-ribityllumazine by condensation of 5-amino-6-(D-ribitylamino)uracil with 3,4-dihydroxy-2-butanone 4-phosphate. This is the penultimate step in the biosynthesis of riboflavin. This is 6,7-dimethyl-8-ribityllumazine synthase from Saccharolobus islandicus (strain M.16.27) (Sulfolobus islandicus).